Consider the following 519-residue polypeptide: ATP synthase subunit alpha, mitochondrial (519 aa).

188–195 is an ATP binding site; it reads GDRQTGKS.

Belongs to the ATPase alpha/beta chains family. As to quaternary structure, F-type ATPases have 2 components, CF(1) - the catalytic core - and CF(0) - the membrane proton channel. CF(1) has five subunits: alpha(3), beta(3), gamma(1), delta(1), epsilon(1). CF(0) has three main subunits: a, b and c.

It localises to the mitochondrion. The protein resides in the mitochondrion inner membrane. Functionally, mitochondrial membrane ATP synthase (F(1)F(0) ATP synthase or Complex V) produces ATP from ADP in the presence of a proton gradient across the membrane which is generated by electron transport complexes of the respiratory chain. F-type ATPases consist of two structural domains, F(1) - containing the extramembraneous catalytic core, and F(0) - containing the membrane proton channel, linked together by a central stalk and a peripheral stalk. During catalysis, ATP synthesis in the catalytic domain of F(1) is coupled via a rotary mechanism of the central stalk subunits to proton translocation. Subunits alpha and beta form the catalytic core in F(1). Rotation of the central stalk against the surrounding alpha(3)beta(3) subunits leads to hydrolysis of ATP in three separate catalytic sites on the beta subunits. Subunit alpha does not bear the catalytic high-affinity ATP-binding sites. The polypeptide is ATP synthase subunit alpha, mitochondrial (atp1) (Dictyostelium citrinum (Slime mold)).